Consider the following 295-residue polypeptide: Craniofacial development protein 1 (295 aa).

Composition is skewed to acidic residues over residues 1-18 (MEEF…DEDY) and 25-43 (YSED…DGEE). 2 disordered regions span residues 1–155 (MEEF…KPKE) and 188–219 (FLKQ…RTSG). A compositionally biased stretch (basic residues) spans 49–65 (KGKRRKAQSIPARKRKQ). Residues 70-93 (LDEEEDGEEDSGGSSREEDEEEQE) are compositionally biased toward acidic residues. A phosphoserine mark is found at Ser-80, Ser-83, Ser-84, and Ser-112. The segment covering 120 to 130 (KSKAASSSQVK) has biased composition (low complexity). Basic and acidic residues-rich tracts occupy residues 145-155 (VKADELEKPKE) and 188-197 (FLKQTEKEKP). Residue Lys-146 forms a Glycyl lysine isopeptide (Lys-Gly) (interchain with G-Cter in SUMO2) linkage. A hydrophilic region spans residues 174–213 (VTKEVDATSKEAKSFLKQTEKEKPQALVTSAATPPPAGSG). Ser-212 carries the phosphoserine modification. The region spanning 214–295 (IKRTSGMSSL…RDLRLSKMKP (82 aa)) is the BCNT-C domain. N6-methyllysine is present on Lys-215. Residue Ser-246 is modified to Phosphoserine.

Its subcellular location is the chromosome. It localises to the centromere. The protein localises to the kinetochore. May play a role during embryogenesis. In Rattus norvegicus (Rat), this protein is Craniofacial development protein 1 (Cfdp1).